The primary structure comprises 292 residues: Xyloglucan endotransglucosylase/hydrolase protein 2 (292 aa).

An N-terminal signal peptide occupies residues Met1–Ala24. Residues Arg25 to Tyr219 enclose the GH16 domain. Glu106 acts as the Nucleophile in catalysis. Glu110 functions as the Proton donor in the catalytic mechanism. Xyloglucan-binding positions include Glu110, Gln123–Asn125, Gly133–Glu135, Asn198–Trp199, and Gly203. 2 cysteine pairs are disulfide-bonded: Cys227/Cys239 and Cys275/Cys288. Residue Arg280 coordinates xyloglucan.

Belongs to the glycosyl hydrolase 16 family. XTH group 1 subfamily. Contains at least one intrachain disulfide bond essential for its enzymatic activity.

Its subcellular location is the secreted. It localises to the cell wall. The protein localises to the extracellular space. The protein resides in the apoplast. It carries out the reaction breaks a beta-(1-&gt;4) bond in the backbone of a xyloglucan and transfers the xyloglucanyl segment on to O-4 of the non-reducing terminal glucose residue of an acceptor, which can be a xyloglucan or an oligosaccharide of xyloglucan.. In terms of biological role, may catalyze xyloglucan endohydrolysis (XEH) and/or endotransglycosylation (XET). Cleaves and religates xyloglucan polymers, an essential constituent of the primary cell wall, and thereby participates in cell wall construction of growing tissues. The protein is Xyloglucan endotransglucosylase/hydrolase protein 2 (XTH2) of Arabidopsis thaliana (Mouse-ear cress).